We begin with the raw amino-acid sequence, 269 residues long: 4-hydroxy-tetrahydrodipicolinate reductase (269 aa).

NAD(+) contacts are provided by residues 10–15, glutamate 36, 99–101, and 123–126; these read GANGRM, GTT, and AANF. Catalysis depends on histidine 156, which acts as the Proton donor/acceptor. Histidine 157 provides a ligand contact to (S)-2,3,4,5-tetrahydrodipicolinate. Lysine 160 (proton donor) is an active-site residue. 166 to 167 is a (S)-2,3,4,5-tetrahydrodipicolinate binding site; it reads GT.

Belongs to the DapB family.

The protein localises to the cytoplasm. The enzyme catalyses (S)-2,3,4,5-tetrahydrodipicolinate + NAD(+) + H2O = (2S,4S)-4-hydroxy-2,3,4,5-tetrahydrodipicolinate + NADH + H(+). It carries out the reaction (S)-2,3,4,5-tetrahydrodipicolinate + NADP(+) + H2O = (2S,4S)-4-hydroxy-2,3,4,5-tetrahydrodipicolinate + NADPH + H(+). It participates in amino-acid biosynthesis; L-lysine biosynthesis via DAP pathway; (S)-tetrahydrodipicolinate from L-aspartate: step 4/4. Catalyzes the conversion of 4-hydroxy-tetrahydrodipicolinate (HTPA) to tetrahydrodipicolinate. The protein is 4-hydroxy-tetrahydrodipicolinate reductase of Neisseria meningitidis serogroup A / serotype 4A (strain DSM 15465 / Z2491).